We begin with the raw amino-acid sequence, 476 residues long: tRNA(Ile)-lysidine synthase (476 aa).

Position 25–30 (25–30 (SGGPDS)) interacts with ATP.

The protein belongs to the tRNA(Ile)-lysidine synthase family.

It is found in the cytoplasm. It catalyses the reaction cytidine(34) in tRNA(Ile2) + L-lysine + ATP = lysidine(34) in tRNA(Ile2) + AMP + diphosphate + H(+). Its function is as follows. Ligates lysine onto the cytidine present at position 34 of the AUA codon-specific tRNA(Ile) that contains the anticodon CAU, in an ATP-dependent manner. Cytidine is converted to lysidine, thus changing the amino acid specificity of the tRNA from methionine to isoleucine. The protein is tRNA(Ile)-lysidine synthase of Bacillus licheniformis (strain ATCC 14580 / DSM 13 / JCM 2505 / CCUG 7422 / NBRC 12200 / NCIMB 9375 / NCTC 10341 / NRRL NRS-1264 / Gibson 46).